The chain runs to 163 residues: Large ribosomal subunit protein uL11 (163 aa).

Belongs to the universal ribosomal protein uL11 family. As to quaternary structure, part of the ribosomal stalk of the 50S ribosomal subunit. Interacts with L10 and the large rRNA to form the base of the stalk. L10 forms an elongated spine to which L12 dimers bind in a sequential fashion forming a multimeric L10(L12)X complex.

In terms of biological role, forms part of the ribosomal stalk which helps the ribosome interact with GTP-bound translation factors. The sequence is that of Large ribosomal subunit protein uL11 from Thermococcus onnurineus (strain NA1).